A 113-amino-acid polypeptide reads, in one-letter code: Large ribosomal subunit protein uL22 (113 aa).

The protein belongs to the universal ribosomal protein uL22 family. As to quaternary structure, part of the 50S ribosomal subunit.

In terms of biological role, this protein binds specifically to 23S rRNA; its binding is stimulated by other ribosomal proteins, e.g. L4, L17, and L20. It is important during the early stages of 50S assembly. It makes multiple contacts with different domains of the 23S rRNA in the assembled 50S subunit and ribosome. The globular domain of the protein is located near the polypeptide exit tunnel on the outside of the subunit, while an extended beta-hairpin is found that lines the wall of the exit tunnel in the center of the 70S ribosome. The sequence is that of Large ribosomal subunit protein uL22 from Bacillus cytotoxicus (strain DSM 22905 / CIP 110041 / 391-98 / NVH 391-98).